Reading from the N-terminus, the 59-residue chain is Mitochondrial sheath formation-associated protein (59 aa).

Over 1-6 (MIVLGW) the chain is Mitochondrial intermembrane. A run of 2 helical transmembrane segments spans residues 2-22 (IVLG…FPEL) and 7-23 (MFFV…PELM). At 24-40 (PPTLKWQERWPVQESKT) the chain is on the cytoplasmic side.

In terms of assembly, interacts with VDAC3.

The protein localises to the mitochondrion outer membrane. In terms of biological role, regulates sperm development. May be involved in mitochondrial sheath formation. In Homo sapiens (Human), this protein is Mitochondrial sheath formation-associated protein.